A 573-amino-acid chain; its full sequence is Isocitrate dehydrogenase kinase/phosphatase (573 aa).

Residues 317–323 (APGVRGM) and lysine 338 each bind ATP. Aspartate 373 is an active-site residue.

Belongs to the AceK family.

The protein resides in the cytoplasm. The catalysed reaction is L-seryl-[isocitrate dehydrogenase] + ATP = O-phospho-L-seryl-[isocitrate dehydrogenase] + ADP + H(+). Functionally, bifunctional enzyme which can phosphorylate or dephosphorylate isocitrate dehydrogenase (IDH) on a specific serine residue. This is a regulatory mechanism which enables bacteria to bypass the Krebs cycle via the glyoxylate shunt in response to the source of carbon. When bacteria are grown on glucose, IDH is fully active and unphosphorylated, but when grown on acetate or ethanol, the activity of IDH declines drastically concomitant with its phosphorylation. This chain is Isocitrate dehydrogenase kinase/phosphatase, found in Pseudomonas fluorescens (strain Pf0-1).